The primary structure comprises 308 residues: Glycine-rich protein GRP33 (308 aa).

In terms of domain architecture, KH spans 83–118 (DQFPKYNFLGKLLGPGGSTMKQLQDETMTKISILGR). Composition is skewed to gly residues over residues 203 to 220 (GPMGPQGRGRGRGRGGFS) and 273 to 294 (RGAGAGARGARGGLDQSRGGGK). Disordered stretches follow at residues 203–222 (GPMGPQGRGRGRGRGGFSGP) and 270–308 (SPGRGAGAGARGARGGLDQSRGGGKFPSARGGRGRAAPY).

Post-translationally, the arginines in the Gly-rich domain might be methylated.

This Artemia salina (Brine shrimp) protein is Glycine-rich protein GRP33.